A 114-amino-acid chain; its full sequence is T cell receptor beta variable 10-3 (114 aa).

Residues 1–21 (MGTRLFFYVALCLLWTGHMDA) form the signal peptide. Positions 22-114 (GITQSPRHKV…TSVYFCAISE (93 aa)) constitute an Ig-like domain. Cys-42 and Cys-110 are joined by a disulfide.

As to quaternary structure, alpha-beta TR is a heterodimer composed of an alpha and beta chain; disulfide-linked. The alpha-beta TR is associated with the transmembrane signaling CD3 coreceptor proteins to form the TR-CD3 (TcR or TCR). The assembly of alpha-beta TR heterodimers with CD3 occurs in the endoplasmic reticulum where a single alpha-beta TR heterodimer associates with one CD3D-CD3E heterodimer, one CD3G-CD3E heterodimer and one CD247 homodimer forming a stable octameric structure. CD3D-CD3E and CD3G-CD3E heterodimers preferentially associate with TR alpha and TR beta chains, respectively. The association of the CD247 homodimer is the last step of TcR assembly in the endoplasmic reticulum and is required for transport to the cell surface.

The protein resides in the cell membrane. Its function is as follows. V region of the variable domain of T cell receptor (TR) beta chain that participates in the antigen recognition. Alpha-beta T cell receptors are antigen specific receptors which are essential to the immune response and are present on the cell surface of T lymphocytes. Recognize peptide-major histocompatibility (MH) (pMH) complexes that are displayed by antigen presenting cells (APC), a prerequisite for efficient T cell adaptive immunity against pathogens. Binding of alpha-beta TR to pMH complex initiates TR-CD3 clustering on the cell surface and intracellular activation of LCK that phosphorylates the ITAM motifs of CD3G, CD3D, CD3E and CD247 enabling the recruitment of ZAP70. In turn ZAP70 phosphorylates LAT, which recruits numerous signaling molecules to form the LAT signalosome. The LAT signalosome propagates signal branching to three major signaling pathways, the calcium, the mitogen-activated protein kinase (MAPK) kinase and the nuclear factor NF-kappa-B (NF-kB) pathways, leading to the mobilization of transcription factors that are critical for gene expression and essential for T cell growth and differentiation. The T cell repertoire is generated in the thymus, by V-(D)-J rearrangement. This repertoire is then shaped by intrathymic selection events to generate a peripheral T cell pool of self-MH restricted, non-autoaggressive T cells. Post-thymic interaction of alpha-beta TR with the pMH complexes shapes TR structural and functional avidity. The chain is T cell receptor beta variable 10-3 from Homo sapiens (Human).